The primary structure comprises 236 residues: Small ribosomal subunit protein eS6 (236 aa).

This sequence belongs to the eukaryotic ribosomal protein eS6 family. Component of the small ribosomal subunit. Part of the small subunit (SSU) processome, composed of more than 70 proteins and the RNA chaperone small nucleolar RNA (snoRNA) U3. Ribosomal protein S6 is the major substrate of protein kinases in eukaryote ribosomes.

It is found in the cytoplasm. It localises to the nucleus. Its subcellular location is the nucleolus. Functionally, component of the 40S small ribosomal subunit. Plays an important role in controlling cell growth and proliferation through the selective translation of particular classes of mRNA. Part of the small subunit (SSU) processome, first precursor of the small eukaryotic ribosomal subunit. During the assembly of the SSU processome in the nucleolus, many ribosome biogenesis factors, an RNA chaperone and ribosomal proteins associate with the nascent pre-rRNA and work in concert to generate RNA folding, modifications, rearrangements and cleavage as well as targeted degradation of pre-ribosomal RNA by the RNA exosome. The chain is Small ribosomal subunit protein eS6 (rps6) from Dictyostelium discoideum (Social amoeba).